Consider the following 70-residue polypeptide: Small ribosomal subunit protein bS21 (70 aa).

This sequence belongs to the bacterial ribosomal protein bS21 family.

The polypeptide is Small ribosomal subunit protein bS21 (Sulfurimonas denitrificans (strain ATCC 33889 / DSM 1251) (Thiomicrospira denitrificans (strain ATCC 33889 / DSM 1251))).